A 299-amino-acid polypeptide reads, in one-letter code: DNA-binding transcriptional activator HetR (299 aa).

The segment at 1 to 98 (MSNDIDLIKR…GKLLKTLGSQ (98 aa)) is DNA-binding domain. DNA contacts are provided by residues 34-40 (RHGAFLD) and 60-76 (NLRMTGHLHHLEPKRVK). The flap domain stretch occupies residues 99–216 (EPRYLIQFPY…FYALTRPFYA (118 aa)). The active site involves Ser-152. 179–181 (SEA) contributes to the DNA binding site. Residues 217–299 (PADDQERTYI…LQMVFGRKED (83 aa)) form a hood domain region.

This sequence belongs to the peptidase S48 family. As to quaternary structure, upon expression in E.coli most protein is monomeric, although varying amounts of homodimer can be seen. Homodimer; disulfide-linked. Homodimer. Binds the 6 residue C-terminal peptide of PatS; one peptide binds to each subunit. In bacterial two-hybrid assays interacts robustly with itself, Alr2902 and Alr3234 and more weakly with Als1930. Probably autodegrades.

With respect to regulation, protease activity is inhibited by PMSF, suggesting this is a serine protease. In terms of biological role, controls heterocyst differentiation. Dimerization is required for DNA-binding. Has both a protease and a DNA-binding activity. Functionally, controls heterocyst differentiation; increased expression leads to more heterocysts than usual. Has protease activity. Binds the promoter regions of hetR, hepA and patS and is required for their expression. Dimerization is required for DNA-binding, DNA-binding is inhibited by the PatS6 peptide. Binds the inverted repeat 5'-GTAGGCGAGGGGTCTAACCCCTCATTACC-3' found in the hetP promoter, required for expression of hetP. The protein is DNA-binding transcriptional activator HetR of Nostoc sp. (strain PCC 7120 / SAG 25.82 / UTEX 2576).